A 308-amino-acid polypeptide reads, in one-letter code: Ectoine dioxygenase (308 aa).

Gln-131 is an L-ectoine binding site. Lys-137 contacts 2-oxoglutarate. Residues His-148, Asp-150, and His-249 each coordinate Fe cation.

The protein belongs to the PhyH family. EctD subfamily. In terms of assembly, homodimer. The cofactor is Fe(2+).

It carries out the reaction L-ectoine + 2-oxoglutarate + O2 = 5-hydroxyectoine + succinate + CO2. In terms of biological role, involved in the biosynthesis of 5-hydroxyectoine, called compatible solute, which helps organisms to survive extreme osmotic stress by acting as a highly soluble organic osmolyte. Catalyzes the 2-oxoglutarate-dependent selective hydroxylation of L-ectoine to yield (4S,5S)-5-hydroxyectoine. This is Ectoine dioxygenase from Bordetella parapertussis (strain 12822 / ATCC BAA-587 / NCTC 13253).